Here is a 487-residue protein sequence, read N- to C-terminus: Adenosylhomocysteinase (487 aa).

Substrate contacts are provided by threonine 76, aspartate 151, and glutamate 212. Residue 213-215 (TTT) participates in NAD(+) binding. Residues lysine 242 and aspartate 246 each contribute to the substrate site. Residues asparagine 247, 276–281 (GYGDVG), glutamate 299, asparagine 334, 355–357 (IGH), and asparagine 403 each bind NAD(+).

The protein belongs to the adenosylhomocysteinase family. NAD(+) serves as cofactor.

Its subcellular location is the cytoplasm. The catalysed reaction is S-adenosyl-L-homocysteine + H2O = L-homocysteine + adenosine. It functions in the pathway amino-acid biosynthesis; L-homocysteine biosynthesis; L-homocysteine from S-adenosyl-L-homocysteine: step 1/1. May play a key role in the regulation of the intracellular concentration of adenosylhomocysteine. The polypeptide is Adenosylhomocysteinase (Bacteroides fragilis (strain YCH46)).